The primary structure comprises 614 residues: Maltose permease MAL31 (614 aa).

The interval 1–48 (MKGLSSLINRKKDRNDSHLDEIENGVNATEFNSIEMEEQGKKSDFDLS) is disordered. Over 1 to 108 (MKGLSSLINR…AAAWSLLVST (108 aa)) the chain is Cytoplasmic. Basic and acidic residues predominate over residues 38–48 (EQGKKSDFDLS). The helical transmembrane segment at 109 to 129 (TLIQEGYDTAILGAFYALPVF) threads the bilayer. Over 130–144 (QKKYGSLNSNTGDYE) the chain is Extracellular. A helical transmembrane segment spans residues 145 to 165 (ISVSWQIGLCLCYMAGEIVGL). Topologically, residues 166 to 180 (QMTGPSVDYMGNRYT) are cytoplasmic. The chain crosses the membrane as a helical span at residues 181 to 201 (LIMALFFLAAFIFILYFCKSL). A topological domain (extracellular) is located at residue Gly-202. The chain crosses the membrane as a helical span at residues 203–223 (MIAVGQALCGMPWGCFQCLTV). The Cytoplasmic portion of the chain corresponds to 224–236 (SYASEICPLALRY). Residues 237–257 (YLTTYSNLCWAFGQLFAAGIM) form a helical membrane-spanning segment. Over 258–272 (KNSQNKYANSELGYK) the chain is Extracellular. Residues 273–293 (LPFALQWIWPLPLAVGIFFAP) form a helical membrane-spanning segment. The Cytoplasmic segment spans residues 294–364 (ESPWWLVKKG…KDGINRRRTR (71 aa)). A helical transmembrane segment spans residues 365-385 (IACLCWIGQCSCGASLIGYST). The Extracellular segment spans residues 386 to 398 (YFYEKAGVSTDTA). A helical membrane pass occupies residues 399–419 (FTFSIIQYCLGIAATFISWWA). Topologically, residues 420 to 427 (SKYCGRFD) are cytoplasmic. A helical membrane pass occupies residues 428–448 (LYAFGLAFQAIMFFIIGGLGC). The Extracellular portion of the chain corresponds to 449 to 460 (SDTHGAKMGSGA). The helical transmembrane segment at 461 to 481 (LLMVVAFFYNLGIAPVVFCLV) threads the bilayer. Over 482–493 (SEIPSSRLRTKT) the chain is Cytoplasmic. Residues 494 to 514 (IILARNAYNVIQVVVTVLIMY) form a helical membrane-spanning segment. The Extracellular segment spans residues 515–526 (QLNSEKWNWGAK). A helical transmembrane segment spans residues 527-547 (SGFFWGGFCLATLAWAVVDLP). Over 548 to 614 (ETAGRTFIEI…GRNTSSVVNK (67 aa)) the chain is Cytoplasmic. A disordered region spans residues 595-614 (EDLETSVVDEGRNTSSVVNK).

It belongs to the major facilitator superfamily. Sugar transporter (TC 2.A.1.1) family.

The protein localises to the membrane. High-affinity uptake of maltose and maltotriose. Also transports turanose but not alpha-methylglucoside, melezitose or trehalose. This is Maltose permease MAL31 (MAL31) from Saccharomyces cerevisiae (strain ATCC 204508 / S288c) (Baker's yeast).